A 177-amino-acid chain; its full sequence is MSVSDIISKSLIEYDSTTPTIQYLIENTYFEGYKTNSDTERSRLKFIHKDTNKVLFETEIETLAIYYDKLNIWSWSWSQVGLYNSENYLAKEMLLYALKLGYDMSYIKSIITTSRGVIRDPIQVDINLAIGSGIIKQPYIYPYVYEVEKRKLYYYIILLNKQELDKLSKKLNKQSNE.

This is an uncharacterized protein from Acanthamoeba polyphaga mimivirus (APMV).